Consider the following 1383-residue polypeptide: DNA-directed RNA polymerase subunit beta (1383 aa).

This sequence belongs to the RNA polymerase beta chain family. In terms of assembly, the RNAP catalytic core consists of 2 alpha, 1 beta, 1 beta' and 1 omega subunit. When a sigma factor is associated with the core the holoenzyme is formed, which can initiate transcription.

The catalysed reaction is RNA(n) + a ribonucleoside 5'-triphosphate = RNA(n+1) + diphosphate. DNA-dependent RNA polymerase catalyzes the transcription of DNA into RNA using the four ribonucleoside triphosphates as substrates. In Xanthomonas euvesicatoria pv. vesicatoria (strain 85-10) (Xanthomonas campestris pv. vesicatoria), this protein is DNA-directed RNA polymerase subunit beta.